Here is a 520-residue protein sequence, read N- to C-terminus: Lysine--tRNA ligase (520 aa).

Residues 1 to 21 are disordered; it reads MSDHLIPSIPTPAAAPAAAPA. Residues 12 to 21 show a composition bias toward low complexity; sequence PAAAPAAAPA. Glutamate 430 and glutamate 437 together coordinate Mg(2+).

This sequence belongs to the class-II aminoacyl-tRNA synthetase family. As to quaternary structure, homodimer. Mg(2+) serves as cofactor.

The protein resides in the cytoplasm. The enzyme catalyses tRNA(Lys) + L-lysine + ATP = L-lysyl-tRNA(Lys) + AMP + diphosphate. This chain is Lysine--tRNA ligase, found in Variovorax paradoxus (strain S110).